The chain runs to 67 residues: ATP synthase F(0) complex subunit 8 (67 aa).

A helical transmembrane segment spans residues 8-24 (TWLIMISSMILTLFITF). K54 is modified (N6-acetyllysine; alternate). Residue K54 is modified to N6-succinyllysine; alternate. K57 is modified (N6-acetyllysine).

The protein belongs to the ATPase protein 8 family. In terms of assembly, component of the ATP synthase complex composed at least of ATP5F1A/subunit alpha, ATP5F1B/subunit beta, ATP5MC1/subunit c (homooctomer), MT-ATP6/subunit a, MT-ATP8/subunit 8, ATP5ME/subunit e, ATP5MF/subunit f, ATP5MG/subunit g, ATP5MK/subunit k, ATP5MJ/subunit j, ATP5F1C/subunit gamma, ATP5F1D/subunit delta, ATP5F1E/subunit epsilon, ATP5PF/subunit F6, ATP5PB/subunit b, ATP5PD/subunit d, ATP5PO/subunit OSCP. ATP synthase complex consists of a soluble F(1) head domain (subunits alpha(3) and beta(3)) - the catalytic core - and a membrane F(0) domain - the membrane proton channel (subunits c, a, 8, e, f, g, k and j). These two domains are linked by a central stalk (subunits gamma, delta, and epsilon) rotating inside the F1 region and a stationary peripheral stalk (subunits F6, b, d, and OSCP). Interacts with PRICKLE3.

The protein localises to the mitochondrion membrane. Functionally, subunit 8, of the mitochondrial membrane ATP synthase complex (F(1)F(0) ATP synthase or Complex V) that produces ATP from ADP in the presence of a proton gradient across the membrane which is generated by electron transport complexes of the respiratory chain. ATP synthase complex consist of a soluble F(1) head domain - the catalytic core - and a membrane F(1) domain - the membrane proton channel. These two domains are linked by a central stalk rotating inside the F(1) region and a stationary peripheral stalk. During catalysis, ATP synthesis in the catalytic domain of F(1) is coupled via a rotary mechanism of the central stalk subunits to proton translocation. In vivo, can only synthesize ATP although its ATP hydrolase activity can be activated artificially in vitro. Part of the complex F(0) domain. In Halichoerus grypus (Gray seal), this protein is ATP synthase F(0) complex subunit 8.